A 318-amino-acid chain; its full sequence is Ubiquinol oxidase, mitochondrial (318 aa).

Residues 1 to 46 constitute a mitochondrion transit peptide; sequence MTVMRGLLNGGRYGNRYIWTAISLRHPEVMEGNGLESAVMQWRRML. Residues 143–163 traverse the membrane as a helical segment; sequence AMMLETVAAVPGMVGGMLLHL. 3 residues coordinate Fe cation: glutamate 147, glutamate 186, and histidine 189. The helical transmembrane segment at 205-225 threads the bilayer; sequence LLVLAVQGVFFNSFFVLYVLS. Residues glutamate 237, glutamate 288, and histidine 291 each coordinate Fe cation.

It belongs to the alternative oxidase family. Homodimer; disulfide-linked. Fe cation is required as a cofactor.

Its subcellular location is the mitochondrion inner membrane. It carries out the reaction 2 a ubiquinol + O2 = 2 a ubiquinone + 2 H2O. Its function is as follows. Catalyzes the cyanide-resistant oxidation of ubiquinol and the reduction of molecular oxygen to water, but does not translocate protons and consequently is not linked to oxidative phosphorylation. May increase respiration when the cytochrome respiratory pathway is restricted, or in response to low temperatures. This chain is Ubiquinol oxidase, mitochondrial (AOMI 1), found in Mangifera indica (Mango).